Consider the following 345-residue polypeptide: BAG family molecular chaperone regulator 1 (345 aa).

Residues 1–137 (MAQRGGARRP…STRSEEVTRE (137 aa)) are disordered. Residues 68–80 (RRPRMKKKTRRRS) show a composition bias toward basic residues. Residues 81-91 (TRSEELTRSEE) are compositionally biased toward basic and acidic residues. Residues 95-114 (SEEATWSEEATQSEEATQGE) are compositionally biased toward low complexity. A run of 7 repeats spans residues 96–101 (EEATWS), 102–107 (EEATQS), 108–113 (EEATQG), 114–119 (EEMNRS), 120–125 (QEVTRD), 126–131 (EESTRS), and 132–137 (EEVTRE). Residues 96 to 137 (EEATWSEEATQSEEATQGEEMNRSQEVTRDEESTRSEEVTRE) are 7 X 6 AA tandem repeat of E-E-X(4). The segment covering 115–137 (EMNRSQEVTRDEESTRSEEVTRE) has biased composition (basic and acidic residues). The 81-residue stretch at 144-224 (LTVTVTHSNE…VMLIGKKNSP (81 aa)) folds into the Ubiquitin-like domain. The segment at 172–219 (DLAQVVEEVIGVPQSFQKLIFKGKSLKEMETPLSALGIQDGCRVMLIG) is interaction with HSPA8. The interaction with PPP1R15A stretch occupies residues 216-345 (MLIGKKNSPQ…LQSTNFALAE (130 aa)). Serine 223 is modified (phosphoserine). The region spanning 246–326 (QLEELNKELT…AFLAECDTVE (81 aa)) is the BAG domain.

As to quaternary structure, homodimer. Forms a heteromeric complex with HSP70/HSC70. Binds to the ATPase domain of HSP/HSC70 chaperones. Isoform 1, isoform 3 and isoform 4 but not isoform 2 interact with HSPA8/HSC70. Interacts with NR3C1. Interacts with the N-terminal region of MAPRE2. Interacts with PPP1R15A. Interacts with BCL2 in an ATP-dependent manner. Isoform 2 does not interact with BCL2. Interacts with SIAH1. Interacts with HSPA8 (via NBD). Interacts with HSPA1A (via NBD) and HSPA1B (via NBD). Interacts with SIAH2. Interacts with ESR1; the interaction is promoted in the absence of estradiol (17-beta-estradiol/E2). Post-translationally, ubiquitinated; mediated by SIAH1 or SIAH2 and leading to its subsequent proteasomal degradation. In terms of tissue distribution, isoform 4 is the most abundantly expressed isoform. It is ubiquitously expressed throughout most tissues, except the liver, colon, breast and uterine myometrium. Isoform 1 is expressed in the ovary and testis. Isoform 4 is expressed in several types of tumor cell lines, and at consistently high levels in leukemia and lymphoma cell lines. Isoform 1 is expressed in the prostate, breast and leukemia cell lines. Isoform 3 is the least abundant isoform in tumor cell lines (at protein level).

It is found in the nucleus. Its subcellular location is the cytoplasm. Functionally, co-chaperone for HSP70 and HSC70 chaperone proteins. Acts as a nucleotide-exchange factor (NEF) promoting the release of ADP from the HSP70 and HSC70 proteins thereby triggering client/substrate protein release. Nucleotide release is mediated via its binding to the nucleotide-binding domain (NBD) of HSPA8/HSC70 where as the substrate release is mediated via its binding to the substrate-binding domain (SBD) of HSPA8/HSC70. Inhibits the pro-apoptotic function of PPP1R15A, and has anti-apoptotic activity. Markedly increases the anti-cell death function of BCL2 induced by various stimuli. Involved in the STUB1-mediated proteasomal degradation of ESR1 in response to age-related circulating estradiol (17-beta-estradiol/E2) decline, thereby promotes neuronal apoptosis in response to ischemic reperfusion injury. This chain is BAG family molecular chaperone regulator 1 (BAG1), found in Homo sapiens (Human).